Here is a 284-residue protein sequence, read N- to C-terminus: ATP phosphoribosyltransferase (284 aa).

The protein belongs to the ATP phosphoribosyltransferase family. Long subfamily. In terms of assembly, equilibrium between an active dimeric form, an inactive hexameric form and higher aggregates. Interconversion between the various forms is largely reversible and is influenced by the natural substrates and inhibitors of the enzyme. It depends on Mg(2+) as a cofactor.

It localises to the cytoplasm. It carries out the reaction 1-(5-phospho-beta-D-ribosyl)-ATP + diphosphate = 5-phospho-alpha-D-ribose 1-diphosphate + ATP. The protein operates within amino-acid biosynthesis; L-histidine biosynthesis; L-histidine from 5-phospho-alpha-D-ribose 1-diphosphate: step 1/9. With respect to regulation, feedback inhibited by histidine. Its function is as follows. Catalyzes the condensation of ATP and 5-phosphoribose 1-diphosphate to form N'-(5'-phosphoribosyl)-ATP (PR-ATP). Has a crucial role in the pathway because the rate of histidine biosynthesis seems to be controlled primarily by regulation of HisG enzymatic activity. This Mycobacterium bovis (strain ATCC BAA-935 / AF2122/97) protein is ATP phosphoribosyltransferase (hisG).